Consider the following 951-residue polypeptide: Leucine-rich repeat-containing G-protein coupled receptor 4 (951 aa).

An N-terminal signal peptide occupies residues 1–24; it reads MPGPLGLLCFLALGLLGSAGPSGA. The LRRNT domain occupies 25–57; it reads APPLCAAPCSCDGDRRVDCSGKGLTAVPEGLSA. Residues 25 to 544 are Extracellular-facing; the sequence is APPLCAAPCS…LLGSWMIRLT (520 aa). 2 disulfides stabilise this stretch: cysteine 29/cysteine 35 and cysteine 33/cysteine 43. 10 LRR repeats span residues 58–79, 82–103, 106–127, 130–151, 154–177, 178–199, 202–223, 226–247, 249–270, and 273–294; these read FTQALDISMNNITQLPEDAFKN, FLEELQLAGNDLSFIHPKALSG, ELKVLTLQNNQLKTVPSEAIRG, ALQSLRLDANHITSVPEDSFEG, QLRHLWLDDNSLTEVPVHPLSNLP, TLQALTLALNKISSIPDFAFTN, SLVVLHLHNNKIRSLSQHCFDG, NLETLDLNYNNLGEFPQAIKAL, SLKELGFHSNSISVIPDGAFDG, and LLRTIHLYDNPLSFVGNSAFHN. A glycan (N-linked (GlcNAc...) asparagine) is linked at asparagine 68. N-linked (GlcNAc...) asparagine glycosylation is present at asparagine 199. Residues asparagine 294 and asparagine 314 are each glycosylated (N-linked (GlcNAc...) asparagine). 5 LRR repeats span residues 320–341, 344–365, 366–387, 390–411, and 414–435; these read HLESLTLTGTKISSIPNNLCQE, MLRTLDLSYNNIRDLPSFNGCH, ALEEISLQRNQIYQIKEGTFQG, SLRILDLSRNLIHEIHSRAFAT, and PITNLDVSFNELTSFPTEGLNG. A disulfide bridge connects residues cysteine 339 and cysteine 364. 2 disulfide bridges follow: cysteine 470/cysteine 522 and cysteine 471/cysteine 476. Residue asparagine 505 is glycosylated (N-linked (GlcNAc...) asparagine). A helical transmembrane segment spans residues 545–565; the sequence is VWFIFLVALFFNLLVILTTFA. Topologically, residues 566–575 are cytoplasmic; that stretch reads SCTSLPSSKL. A helical membrane pass occupies residues 576-596; that stretch reads FIGLISVSNLFMGIYTGILTF. Residues 597–620 are Extracellular-facing; sequence LDAVSWGRFAEFGIWWETGSGCKV. Residues cysteine 618 and cysteine 693 are joined by a disulfide bond. A helical membrane pass occupies residues 621–641; that stretch reads AGFLAVFSSESAIFLLMLATV. Topologically, residues 642 to 661 are cytoplasmic; that stretch reads ERSLSAKDIMKNGKSNHLKQ. The chain crosses the membrane as a helical span at residues 662–682; it reads FRVAALLAFLGATVAGCFPLF. Residues 683 to 703 lie on the Extracellular side of the membrane; that stretch reads HRGEYSASPLCLPFPTGETPS. A helical transmembrane segment spans residues 704-724; the sequence is LGFTVTLVLLNSLAFLLMAVI. The Cytoplasmic segment spans residues 725 to 756; the sequence is YTKLYCNLEKEDLSENSQSSMIKHVAWLIFTN. Residues 757 to 777 traverse the membrane as a helical segment; it reads CIFFCPVAFFSFAPLITAISI. Residues 778-783 are Extracellular-facing; sequence SPEIMK. Residues 784–804 form a helical membrane-spanning segment; the sequence is SVTLIFFPLPACLNPVLYVFF. Residues 805 to 951 lie on the Cytoplasmic side of the membrane; that stretch reads NPKFKEDWKL…YAYNLPRVKD (147 aa). Serine 920 is modified (phosphoserine).

Belongs to the G-protein coupled receptor 1 family. In terms of tissue distribution, expressed in multiple steroidogenic tissues: placenta, ovary, testis and adrenal. Expressed also in spinal cord, thyroid, stomach, trachea, heart, pancreas, kidney, prostate and spleen.

It is found in the cell membrane. Its function is as follows. Receptor for R-spondins that potentiates the canonical Wnt signaling pathway and is involved in the formation of various organs. Upon binding to R-spondins (RSPO1, RSPO2, RSPO3 or RSPO4), associates with phosphorylated LRP6 and frizzled receptors that are activated by extracellular Wnt receptors, triggering the canonical Wnt signaling pathway to increase expression of target genes. In contrast to classical G-protein coupled receptors, does not activate heterotrimeric G-proteins to transduce the signal. Its function as activator of the Wnt signaling pathway is required for the development of various organs, including liver, kidney, intestine, bone, reproductive tract and eye. May also act as a receptor for norrin (NDP), such results however require additional confirmation in vivo. Required during spermatogenesis to activate the Wnt signaling pathway in peritubular myoid cells. Required for the maintenance of intestinal stem cells and Paneth cell differentiation in postnatal intestinal crypts. Acts as a regulator of bone formation and remodeling. Involved in kidney development; required for maintaining the ureteric bud in an undifferentiated state. Involved in the development of the anterior segment of the eye. Required during erythropoiesis. Also acts as a negative regulator of innate immunity by inhibiting TLR2/TLR4 associated pattern-recognition and pro-inflammatory cytokine production. Plays an important role in regulating the circadian rhythms of plasma lipids, partially through regulating the rhythmic expression of MTTP. Required for proper development of GnRH neurons (gonadotropin-releasing hormone expressing neurons) that control the release of reproductive hormones from the pituitary gland. This is Leucine-rich repeat-containing G-protein coupled receptor 4 (LGR4) from Homo sapiens (Human).